The primary structure comprises 88 residues: Cell division topological specificity factor (88 aa).

Belongs to the MinE family.

Prevents the cell division inhibition by proteins MinC and MinD at internal division sites while permitting inhibition at polar sites. This ensures cell division at the proper site by restricting the formation of a division septum at the midpoint of the long axis of the cell. The polypeptide is Cell division topological specificity factor (Methylibium petroleiphilum (strain ATCC BAA-1232 / LMG 22953 / PM1)).